The following is a 416-amino-acid chain: Putative nucleoside permease NupX (416 aa).

Over 1-2 the chain is Periplasmic; that stretch reads MD. Residues 3–23 traverse the membrane as a helical segment; that stretch reads VMRSVLGMVVLLTIAFLLSVN. At 24–31 the chain is on the cytoplasmic side; the sequence is KKKISLRT. The helical transmembrane segment at 32–52 threads the bilayer; sequence VGAALVLQVVIGGIMLWLPPG. At 53-95 the chain is on the periplasmic side; that stretch reads RWVAEKVAFGVHKVMAYSDAGSAFIFGSLVGPKMDTLFDGAGF. The helical transmembrane segment at 96–118 threads the bilayer; it reads IFGFRVLPAIIFVTALVSILYYI. Residues 119–172 are Cytoplasmic-facing; that stretch reads GVMGILIRILGGIFQKALNISKIESFVAVTTIFLGQNEIPAIVKPFIDRLNRNE. A helical membrane pass occupies residues 173-193; that stretch reads LFTAICSGMASIAGSTMIGYA. The Periplasmic segment spans residues 194–196; sequence ALG. A helical transmembrane segment spans residues 197–217; sequence VPVEYLLAASLMAIPGGILFA. The Cytoplasmic portion of the chain corresponds to 218 to 246; it reads RLLSPATESSQVSFNNLSFTETPPKSIIE. The helical transmembrane segment at 247–267 threads the bilayer; it reads AAATGAMTGLKIAAGVATVVM. The Periplasmic portion of the chain corresponds to 268–352; the sequence is AFVAIIALIN…QTAGTLDAKT (85 aa). The chain crosses the membrane as a helical span at residues 353–373; the sequence is VAIISFALCGFANFGSIGVVV. Residues 374 to 394 lie on the Cytoplasmic side of the membrane; sequence GAFSAVAPHRAPEIAQLGLRA. The helical transmembrane segment at 395–415 threads the bilayer; sequence LAAATLSNLMSATIAGFFIGL. Position 416 (alanine 416) is a topological domain, periplasmic.

It belongs to the concentrative nucleoside transporter (CNT) (TC 2.A.41) family.

The protein resides in the cell inner membrane. The polypeptide is Putative nucleoside permease NupX (nupX) (Escherichia coli (strain K12)).